A 338-amino-acid polypeptide reads, in one-letter code: Phenylalanine--tRNA ligase alpha subunit (338 aa).

Glu259 contacts Mg(2+).

This sequence belongs to the class-II aminoacyl-tRNA synthetase family. Phe-tRNA synthetase alpha subunit type 1 subfamily. In terms of assembly, tetramer of two alpha and two beta subunits. Requires Mg(2+) as cofactor.

The protein localises to the cytoplasm. It catalyses the reaction tRNA(Phe) + L-phenylalanine + ATP = L-phenylalanyl-tRNA(Phe) + AMP + diphosphate + H(+). The protein is Phenylalanine--tRNA ligase alpha subunit of Janthinobacterium sp. (strain Marseille) (Minibacterium massiliensis).